We begin with the raw amino-acid sequence, 1857 residues long: MENGAEASDCDSDETVIEGSVTENEPEDEELPWRRLLLNQDTTCRSEFCFHSGVDGMQKGIHSPEIQLGLKLRKDSQEQNNKNKLLLALSEDLVLQDPQDKTAQNQVLLQTTKEFPVFTVSFPHPEVSWSHQNTGGHEAENCENLPHSKKELRENSDSPEVSLLSGTSPVAPDLVALKERLTEPVKTLAVPNTLSEPGEEVTQTMTSKETKDEESSLETFVSTLEKLLESSECTQEERLLEVMDDFNPQELFSTLSNSLGSVSVPLNAWAAQGRDELENKADAALPAKLLAAVNTGADVGPSCQGQEKSSSVSGGNGCLAVQPIMSQVDEDCTQIAQNIEDPKPFRLQTLTHENAISYEQINKKKNSDPIKNTSTQETPRVLRRSSRLEKLKASRDVVHTEAVLKKPERILSNTLSFKDQINSIFTTDSFSKRKNMHSSGFKNEQIRKSEQLRKKNGTGEMKKMCLCTINRRNVFGENLLYKAALHNDVDLVRCCIKNGENVNQPSYDGWTALHEASIGGYYQAVSELLKGGADVNVKGKYQITPLHDAVMNRHYKVAELLLMSGADPLFRSDHGTCALDEAKDSSMETLLMKYIPQQKKCHLSAQRNSTDPAHVEDMFQNKKPKLSSNNYTEFICDENFDRQEPGHLEINKGSNNLLMSKEYVCEHCQKDSNTTKFGKSNLNSVKNSRTNVSKRKGQKNRQQKKTQVDDRDCNLSQKIGTSSFRRTNKLLTQQQHAVQTLSDLPEESFELSTTTLSSLENGIGYNEACLVSKKSDTHVLDSSDGQELESVDQTEAASVSELSSYKEIKLLPVTTHQQPHTNQEQYSSPYKSLGNNSSNEKGKATNKWEDSFFSFIKGRSADSDSDCHTLDKSIASPKEGMSHDHHEEIMTGQEVDSQQRLSSENYFSQENDLKVHPLTTHPQEEAVNFCDSNLISVQHTPDYKNCLHEISFGNSYAKTEQSSTSCTRPPSTQKVSPLTVEVELLKGLQDSLAHRDSSPLVNQAGIHSLERKQDTDKNYTKKGPNTSSSSRPLPTVVHSQVIEITKAEKRREDLPGNEPINNTDFYSTDINKELANSSQLNQRKEKENVRKSDAELTHNDSEAERTLKSCEEKKKNMDSETHSPCDIQEHRKDQNFRKRKCSLKAPCSQGVNTTGIGKRNKKGESQLHVAARGGNLSRVKVLIEARADVNLRDNAGWTPLHKAASGGFDDVIIELLQAGANVNCENIDGIVPLHGASAGNHLKAAEILLEHGANPNQKDQKQRTALDEADDEKMKELLKSYGAIESTNGEKRNSTDLVKIPTVQPKRYKQFICDNDKAIGSPVPSHKAKKSESLPVHQTISAILQDIEEKQENLLKLEIRNSEDEEQYIGKMLEIKEVMDNILAQQKTERDDLAKKYRVSMESFKHGALREQLANLATRQKSLLVVAKKQKKIRLKIQNYKNATAVSGVGLRKLPCNSDISSDKKSQEPPTMGDSAHAQPGLLAPVSLAYGSMQEIPLSPEIESESQKINICLNAEAIRREEFSGNDINSKQNVQDCTLGGLLRSKPTDDAEKIASSSQPAALTPHAENSQAEATVKGCGFDSSALTGTINISEDKSIFSPNGACLAADPHSQKLSRCNPKRRNKKTASQQPSAGAAEPLPQAPAVLDTYTVHQTLPCLRDSAAAASHTDSTQSSLSSASAHQHPTKTVPHRNTTPRKKAVQLKDLILRGRINPGNNILEFKTQETTHRASVLPSGKLKGENGQIYQNPVTWLKELLGGGSYVTWNYAWNTVTYLGRELVKCVSEEAPMSAELNPPQLHQPHLSAGTSRESMQTIPHYLQIKEILQISKQELLPCHVMEQHWKFYVGRSHSEALLSW.

Disordered regions lie at residues 1–30 (MENG…EDEE) and 195–215 (SEPG…DEES). Positions 195–207 (SEPGEEVTQTMTS) are enriched in polar residues. ANK repeat units lie at residues 475 to 504 (FGEN…NVNQ), 508 to 537 (DGWT…DVNV), and 541 to 570 (YQIT…DPLF). The span at 676–691 (KFGKSNLNSVKNSRTN) shows a compositional bias: polar residues. Disordered regions lie at residues 676 to 711 (KFGK…VDDR), 813 to 844 (VTTH…KGKA), 995 to 1038 (RDSS…TVVH), 1046 to 1065 (KAEK…NTDF), and 1075 to 1137 (ANSS…QNFR). The segment covering 692-704 (VSKRKGQKNRQQK) has biased composition (basic residues). Residues 814–839 (TTHQQPHTNQEQYSSPYKSLGNNSSN) show a composition bias toward polar residues. A compositionally biased stretch (basic and acidic residues) spans 1008 to 1019 (SLERKQDTDKNY). Polar residues predominate over residues 1023-1032 (GPNTSSSSRP). Positions 1082-1136 (QRKEKENVRKSDAELTHNDSEAERTLKSCEEKKKNMDSETHSPCDIQEHRKDQNF) are enriched in basic and acidic residues. 3 ANK repeats span residues 1162-1191 (KGES…DVNL), 1195-1224 (AGWT…NVNC), and 1228-1257 (DGIV…NPNQ). Disordered stretches follow at residues 1457-1479 (NSDI…AHAQ), 1540-1570 (GGLL…AENS), 1609-1640 (DPHS…AEPL), and 1663-1697 (AAAA…TTPR). Over residues 1555–1570 (ASSSQPAALTPHAENS) the composition is skewed to polar residues. The segment covering 1663 to 1683 (AAAASHTDSTQSSLSSASAHQ) has biased composition (low complexity). Residues 1687-1782 (KTVPHRNTTP…TYLGRELVKC (96 aa)) form the RAMA domain.

In terms of assembly, interacts with REC114; the interaction is direct. Interacts with IHO1. Present in meiotic cells (at protein level).

The protein localises to the nucleus. It localises to the chromosome. Required for DNA double-strand breaks (DSBs) formation during meiotic recombination. Regulates the spatial and temporal patterns of pre-DSB recombinosome assembly and recombination activity by acting as a scaffold that anchors REC114 and other factors to specific genomic locations, thereby regulating DSB formation. Plays a key role in recombination in the pseudoautosomal regions of sex chromosomes. The chain is Ankyrin repeat domain-containing protein 31 from Mus musculus (Mouse).